The primary structure comprises 136 residues: Small ribosomal subunit protein uS8c (136 aa).

It belongs to the universal ribosomal protein uS8 family. Part of the 30S ribosomal subunit.

The protein resides in the plastid. It is found in the chloroplast. Its function is as follows. One of the primary rRNA binding proteins, it binds directly to 16S rRNA central domain where it helps coordinate assembly of the platform of the 30S subunit. This chain is Small ribosomal subunit protein uS8c (rps8), found in Oryza sativa subsp. indica (Rice).